Reading from the N-terminus, the 463-residue chain is Major capsid protein (463 aa).

The protein belongs to the NCLDV major capsid protein family. In terms of assembly, homomultimer.

The protein localises to the virion. Functionally, major capsid protein that self assembles to form a T=133 or T=147 icosahedral capsid. This Dryophytes versicolor (chameleon treefrog) protein is Major capsid protein.